Reading from the N-terminus, the 181-residue chain is GTP cyclohydrolase 1 2 (181 aa).

It belongs to the GTP cyclohydrolase I family. In terms of assembly, homomer.

It carries out the reaction GTP + H2O = 7,8-dihydroneopterin 3'-triphosphate + formate + H(+). It functions in the pathway cofactor biosynthesis; 7,8-dihydroneopterin triphosphate biosynthesis; 7,8-dihydroneopterin triphosphate from GTP: step 1/1. The polypeptide is GTP cyclohydrolase 1 2 (folE2) (Pseudomonas aeruginosa (strain ATCC 15692 / DSM 22644 / CIP 104116 / JCM 14847 / LMG 12228 / 1C / PRS 101 / PAO1)).